Reading from the N-terminus, the 334-residue chain is 4-hydroxy-2-methyl-3-oxo-4-farnesyl-3,4-dihydroquinoline-1-oxide ketoreductase (334 aa).

The active-site Proton donor is Tyr139.

It belongs to the 3-beta-HSD family.

The catalysed reaction is aurachin B + NAD(+) + H2O = 4-hydroxy-2-methyl-3-oxo-4-[(2E,6E)-farnesyl]-3,4-dihydroquinoline 1-oxide + NADH. It carries out the reaction 3,4-dihydroxy-2-methyl-4-[(2E,6E)-farnesyl]-3,4-dihydroquinoline 1-oxide + NAD(+) = 4-hydroxy-2-methyl-3-oxo-4-[(2E,6E)-farnesyl]-3,4-dihydroquinoline 1-oxide + NADH + H(+). In terms of biological role, ketoreductase that catalyzes the final step in the conversion of aurachin C to aurachin B. Catalyzes the reduction of 4-hydroxy-2-methyl-3-oxo-4-[(2E,6E)-farnesyl]-3,4-dihydroquinoline-1-oxide to form 3,4-dihydroxy-2-methyl-4-[(2E,6E)-farnesyl]-3,4-dihydroquinoline 1-oxide, which then undergoes a spontaneous dehydration to form aurachin B. Accepts both NADH and NADPH, but has a preference for NADH. The polypeptide is 4-hydroxy-2-methyl-3-oxo-4-farnesyl-3,4-dihydroquinoline-1-oxide ketoreductase (Stigmatella aurantiaca).